The chain runs to 73 residues: Translation initiation factor IF-1 (73 aa).

The 73-residue stretch at 1 to 73 folds into the S1-like domain; that stretch reads MPKKDGAIEI…TRGRIVYRYK (73 aa).

It belongs to the IF-1 family. In terms of assembly, component of the 30S ribosomal translation pre-initiation complex which assembles on the 30S ribosome in the order IF-2 and IF-3, IF-1 and N-formylmethionyl-tRNA(fMet); mRNA recruitment can occur at any time during PIC assembly.

Its subcellular location is the cytoplasm. One of the essential components for the initiation of protein synthesis. Stabilizes the binding of IF-2 and IF-3 on the 30S subunit to which N-formylmethionyl-tRNA(fMet) subsequently binds. Helps modulate mRNA selection, yielding the 30S pre-initiation complex (PIC). Upon addition of the 50S ribosomal subunit IF-1, IF-2 and IF-3 are released leaving the mature 70S translation initiation complex. The sequence is that of Translation initiation factor IF-1 from Salinispora arenicola (strain CNS-205).